Here is a 1287-residue protein sequence, read N- to C-terminus: Pullulanase A (1287 aa).

An N-terminal signal peptide occupies residues 1–44 (MRKTPSHTEKKMVYSIRSLKNGTGSVLIGASLVLLAMATPTISS). A disordered region spans residues 42 to 139 (ISSDESTPTT…VTTETKAEEP (98 aa)). The segment covering 48 to 61 (TPTTNEPNNRNTTT) has biased composition (low complexity). The segment covering 79–90 (DISSPGNANASL) has biased composition (polar residues). Composition is skewed to low complexity over residues 99–113 (TEPTTPAASPADPAP) and 122–133 (EPTTSTSPVTTE). Residues 163–165 (WTW), Trp175, Asp221, 270–272 (WYW), Trp283, Lys325, and Asn330 contribute to the substrate site. 2 residues coordinate Ca(2+): Ser668 and Tyr670. Substrate-binding positions include 674–675 (YD) and Phe750. Residue Asp785 is the Nucleophile of the active site. Catalysis depends on Glu814, which acts as the Proton donor. Trp816 contributes to the substrate binding site. Ca(2+) contacts are provided by Met835, Thr838, and Asp839. Substrate is bound by residues Asp846, Arg849, and Tyr856. Ca(2+) contacts are provided by Asp889 and Asp893. Residues Asn903, Lys976, and 996-998 (DSY) each bind substrate. Position 999 (Asp999) interacts with Ca(2+). The tract at residues 1147 to 1255 (VSQNGTSHES…TPDRQAELPN (109 aa)) is disordered. Positions 1156-1203 (STAEEKPDSTPSKPEHQNEASHPAHQDPAPEARPDSTKPDAKVADAEN) are enriched in basic and acidic residues. A compositionally biased stretch (low complexity) spans 1212–1225 (SQAEQPAQEAQASS). Over residues 1228-1239 (EAVRKESVENSS) the composition is skewed to basic and acidic residues. The short motif at 1253–1257 (LPNTG) is the LPXTG sorting signal element. Thr1256 is modified (pentaglycyl murein peptidoglycan amidated threonine). The propeptide at 1257–1287 (GIKNENKLLFAGISLLALLGLGFLLKNKKEN) is removed by sortase.

It belongs to the glycosyl hydrolase 13 family.

Its subcellular location is the secreted. The protein resides in the cell wall. The protein localises to the cell surface. It catalyses the reaction Hydrolysis of (1-&gt;6)-alpha-D-glucosidic linkages in pullulan, amylopectin and glycogen, and in the alpha- and beta-limit dextrins of amylopectin and glycogen.. Its activity is regulated as follows. Inhibited by 4-O-alpha-D-glucopyranosylmoranoline (G1M). Functionally, virulence factor. Involved in the degradation of glycogen of the mammalian host cells. Hydrolyzes the alpha-1,6-branchpoints of glycogen. Hydrolyzes pullulan. Does not hydrolyze dextran. Binds to mouse lung alveolar type II cells that are rich in glycogen stores. Is an alpha-glucan-specific carbohydrate-binding protein, which binds to amylose (pure alpha-(1,4)-linked glucose), amylopectin (alpha-(1,4)-linked glucose with alpha-(1,6) branch points), pullulan (linear polymer of mixed alpha-(1,4)- and alpha-(1,6)-linked glucose) and glycogen (similar to amylopectin with more frequent alpha-(1,6) branch points) in vitro. Does not bind to dextran (a linear polymer of alpha-(1,6)-linked glucose). The chain is Pullulanase A from Streptococcus pneumoniae.